Consider the following 306-residue polypeptide: Ribonuclease Z (306 aa).

Positions 63, 65, 67, 68, 140, 211, and 269 each coordinate Zn(2+). Residue Asp-67 is the Proton acceptor of the active site.

The protein belongs to the RNase Z family. In terms of assembly, homodimer. The cofactor is Zn(2+).

The catalysed reaction is Endonucleolytic cleavage of RNA, removing extra 3' nucleotides from tRNA precursor, generating 3' termini of tRNAs. A 3'-hydroxy group is left at the tRNA terminus and a 5'-phosphoryl group is left at the trailer molecule.. In terms of biological role, zinc phosphodiesterase, which displays some tRNA 3'-processing endonuclease activity. Probably involved in tRNA maturation, by removing a 3'-trailer from precursor tRNA. This chain is Ribonuclease Z, found in Listeria monocytogenes serotype 4b (strain CLIP80459).